A 153-amino-acid polypeptide reads, in one-letter code: Large ribosomal subunit protein uL13 (153 aa).

It belongs to the universal ribosomal protein uL13 family. Part of the 50S ribosomal subunit.

In terms of biological role, this protein is one of the early assembly proteins of the 50S ribosomal subunit, although it is not seen to bind rRNA by itself. It is important during the early stages of 50S assembly. In Methylobacterium nodulans (strain LMG 21967 / CNCM I-2342 / ORS 2060), this protein is Large ribosomal subunit protein uL13.